Reading from the N-terminus, the 178-residue chain is ATP-dependent protease subunit HslV (178 aa).

T8 is a catalytic residue. Na(+) is bound by residues G163, C166, and T169.

Belongs to the peptidase T1B family. HslV subfamily. A double ring-shaped homohexamer of HslV is capped on each side by a ring-shaped HslU homohexamer. The assembly of the HslU/HslV complex is dependent on binding of ATP.

It localises to the cytoplasm. It catalyses the reaction ATP-dependent cleavage of peptide bonds with broad specificity.. Its activity is regulated as follows. Allosterically activated by HslU binding. Its function is as follows. Protease subunit of a proteasome-like degradation complex believed to be a general protein degrading machinery. The sequence is that of ATP-dependent protease subunit HslV from Xylella fastidiosa (strain 9a5c).